The following is a 229-amino-acid chain: Enolase-phosphatase E1 (229 aa).

Belongs to the HAD-like hydrolase superfamily. MasA/MtnC family. As to quaternary structure, monomer. Requires Mg(2+) as cofactor.

It carries out the reaction 5-methylsulfanyl-2,3-dioxopentyl phosphate + H2O = 1,2-dihydroxy-5-(methylsulfanyl)pent-1-en-3-one + phosphate. The protein operates within amino-acid biosynthesis; L-methionine biosynthesis via salvage pathway; L-methionine from S-methyl-5-thio-alpha-D-ribose 1-phosphate: step 3/6. Its pathway is amino-acid biosynthesis; L-methionine biosynthesis via salvage pathway; L-methionine from S-methyl-5-thio-alpha-D-ribose 1-phosphate: step 4/6. In terms of biological role, bifunctional enzyme that catalyzes the enolization of 2,3-diketo-5-methylthiopentyl-1-phosphate (DK-MTP-1-P) into the intermediate 2-hydroxy-3-keto-5-methylthiopentenyl-1-phosphate (HK-MTPenyl-1-P), which is then dephosphorylated to form the acireductone 1,2-dihydroxy-3-keto-5-methylthiopentene (DHK-MTPene). In Citrobacter koseri (strain ATCC BAA-895 / CDC 4225-83 / SGSC4696), this protein is Enolase-phosphatase E1.